A 491-amino-acid polypeptide reads, in one-letter code: Ketol-acid reductoisomerase (NADP(+)) (491 aa).

One can recognise a KARI N-terminal Rossmann domain in the interval 14–208; the sequence is LKHLGKCRFM…GSHRAGVLES (195 aa). NADP(+) contacts are provided by residues 45-48, R68, and S78; that span reads CGSQ. The active site involves H132. G158 is a binding site for NADP(+). 2 KARI C-terminal knotted domains span residues 209–344 and 345–485; these read SFVA…QAPN and YQQE…MQNM. Mg(2+) is bound by residues D217, E221, E389, and E393. S414 provides a ligand contact to substrate.

The protein belongs to the ketol-acid reductoisomerase family. It depends on Mg(2+) as a cofactor.

The enzyme catalyses (2R)-2,3-dihydroxy-3-methylbutanoate + NADP(+) = (2S)-2-acetolactate + NADPH + H(+). It carries out the reaction (2R,3R)-2,3-dihydroxy-3-methylpentanoate + NADP(+) = (S)-2-ethyl-2-hydroxy-3-oxobutanoate + NADPH + H(+). It functions in the pathway amino-acid biosynthesis; L-isoleucine biosynthesis; L-isoleucine from 2-oxobutanoate: step 2/4. It participates in amino-acid biosynthesis; L-valine biosynthesis; L-valine from pyruvate: step 2/4. Its function is as follows. Involved in the biosynthesis of branched-chain amino acids (BCAA). Catalyzes an alkyl-migration followed by a ketol-acid reduction of (S)-2-acetolactate (S2AL) to yield (R)-2,3-dihydroxy-isovalerate. In the isomerase reaction, S2AL is rearranged via a Mg-dependent methyl migration to produce 3-hydroxy-3-methyl-2-ketobutyrate (HMKB). In the reductase reaction, this 2-ketoacid undergoes a metal-dependent reduction by NADPH to yield (R)-2,3-dihydroxy-isovalerate. This is Ketol-acid reductoisomerase (NADP(+)) from Blochmanniella pennsylvanica (strain BPEN).